Consider the following 323-residue polypeptide: Probable inactive poly [ADP-ribose] polymerase SRO2 (323 aa).

Residues 31–257 (SSVSHAGSSF…FASRPSSPWV (227 aa)) enclose the PARP catalytic domain. The 72-residue stretch at 250–321 (SRPSSPWVSF…IKNHKNRNKV (72 aa)) folds into the RST domain.

In terms of assembly, interacts with STO.

Its subcellular location is the nucleus. In terms of biological role, probable inactive ADP-ribosyltransferase that may be involved in stress and developmental responses. This chain is Probable inactive poly [ADP-ribose] polymerase SRO2 (SRO2), found in Arabidopsis thaliana (Mouse-ear cress).